A 232-amino-acid polypeptide reads, in one-letter code: MQQLYDFYILHQRKYRENSLLVSVFTREFGKLSALIAINKKTTNLYQPLVKLRGQINLAKKADSLSKIYNIEFVESFYQKTYINLLSLQYINELIYLLLNYSHEEDVLFDKYDFILRNIDEANYRYLLRLFELELLNSLGQGIYVDSDIDGMSIQNDCNYIILPNGFRKDFSFAVNSISGSSLKKINQPLSSWSDDDLKAISRVTRVCVDYVLAGKQLKSRKLLVDYLNLKK.

It belongs to the RecO family.

In terms of biological role, involved in DNA repair and RecF pathway recombination. This chain is DNA repair protein RecO, found in Francisella tularensis subsp. novicida (strain U112).